Consider the following 190-residue polypeptide: Potassium-transporting ATPase KdpC subunit (190 aa).

A helical membrane pass occupies residues 10 to 30; sequence TFIFLLLITGGVYPLLTTVLG.

The protein belongs to the KdpC family. In terms of assembly, the system is composed of three essential subunits: KdpA, KdpB and KdpC.

It localises to the cell inner membrane. Its function is as follows. Part of the high-affinity ATP-driven potassium transport (or Kdp) system, which catalyzes the hydrolysis of ATP coupled with the electrogenic transport of potassium into the cytoplasm. This subunit acts as a catalytic chaperone that increases the ATP-binding affinity of the ATP-hydrolyzing subunit KdpB by the formation of a transient KdpB/KdpC/ATP ternary complex. This is Potassium-transporting ATPase KdpC subunit from Shigella dysenteriae serotype 1 (strain Sd197).